The sequence spans 142 residues: Large ribosomal subunit protein uL11 (142 aa).

This sequence belongs to the universal ribosomal protein uL11 family. In terms of assembly, part of the ribosomal stalk of the 50S ribosomal subunit. Interacts with L10 and the large rRNA to form the base of the stalk. L10 forms an elongated spine to which L12 dimers bind in a sequential fashion forming a multimeric L10(L12)X complex. Post-translationally, one or more lysine residues are methylated.

In terms of biological role, forms part of the ribosomal stalk which helps the ribosome interact with GTP-bound translation factors. This chain is Large ribosomal subunit protein uL11, found in Parvibaculum lavamentivorans (strain DS-1 / DSM 13023 / NCIMB 13966).